Reading from the N-terminus, the 433-residue chain is sn-glycerol-3-phosphate-binding periplasmic protein UgpB (433 aa).

An N-terminal signal peptide occupies residues 1–25 (MFTRLITTSALTGAIALTIGSQAFA). 7 residues coordinate sn-glycerol 3-phosphate: Tyr67, Asp91, Ser146, Ser273, Gly307, Tyr346, and Arg397.

Belongs to the bacterial solute-binding protein 1 family. As to quaternary structure, the complex is composed of two ATP-binding proteins (UgpC), two transmembrane proteins (UgpA and UgpE) and a solute-binding protein (UgpB).

It is found in the periplasm. Functionally, part of the ABC transporter complex UgpBAEC involved in sn-glycerol-3-phosphate (G3P) import. Binds G3P. The protein is sn-glycerol-3-phosphate-binding periplasmic protein UgpB (ugpB) of Brucella suis biovar 1 (strain 1330).